We begin with the raw amino-acid sequence, 225 residues long: MTDHHTRETPRNPYAGAYPGNLFMVVAPSGAGKSTLVNALLAGDDAIRLSISYTTRPPRPKELDGEHYHFTTVDDFMKRHDAGEFLESAEVHGNYYGTSRVWIEDQMKSGHDVLLEIDWQGAQQVKKQFHNAVEIFILPPSLEALEERLKKRGQDEPNVITRRLLAAGSEMAHAAEAEYVVINENFDRALSELQCLVAATRSRFASQYARHTQLFVQLGIHLPHA.

Positions 20–198 (GNLFMVVAPS…ALSELQCLVA (179 aa)) constitute a Guanylate kinase-like domain. ATP is bound at residue 27-34 (APSGAGKS).

Belongs to the guanylate kinase family.

It localises to the cytoplasm. It carries out the reaction GMP + ATP = GDP + ADP. Functionally, essential for recycling GMP and indirectly, cGMP. The polypeptide is Guanylate kinase (Paraburkholderia xenovorans (strain LB400)).